The sequence spans 39 residues: MQVNENPNKVPVELNRTSLYLGLLSVLVLGILFSSYFFN.

Residues 18–38 (SLYLGLLSVLVLGILFSSYFF) form a helical membrane-spanning segment.

This sequence belongs to the PsbL family. As to quaternary structure, PSII is composed of 1 copy each of membrane proteins PsbA, PsbB, PsbC, PsbD, PsbE, PsbF, PsbH, PsbI, PsbJ, PsbK, PsbL, PsbM, PsbT, PsbX, PsbY, Psb30/Ycf12, peripheral proteins PsbO, CyanoQ (PsbQ), PsbU, PsbV and a large number of cofactors. It forms dimeric complexes.

Its subcellular location is the cellular thylakoid membrane. Functionally, one of the components of the core complex of photosystem II (PSII). PSII is a light-driven water:plastoquinone oxidoreductase that uses light energy to abstract electrons from H(2)O, generating O(2) and a proton gradient subsequently used for ATP formation. It consists of a core antenna complex that captures photons, and an electron transfer chain that converts photonic excitation into a charge separation. This subunit is found at the monomer-monomer interface and is required for correct PSII assembly and/or dimerization. This Prochlorococcus marinus subsp. pastoris (strain CCMP1986 / NIES-2087 / MED4) protein is Photosystem II reaction center protein L.